Reading from the N-terminus, the 442-residue chain is Interferon-related developmental regulator 2 (442 aa).

Residues 1-15 are compositionally biased toward basic residues; that stretch reads MPRARKGNTLRKGGQ. The segment at 1–71 is disordered; sequence MPRARKGNTL…DVVDEQGQQE (71 aa). The segment covering 43–56 has biased composition (polar residues); it reads TASECPSLLSTTAE.

This sequence belongs to the IFRD family. Associates with ribosomes; promoting ribosome inactivation. As to expression, expressed in many tissues including heart, brain, placenta, lung, liver, skeletal muscle, kidney and pancreas.

Ribosome-binding protein that acts as an inhibitor of mRNA translation by promoting ribosome inactivation. Associates with the P- and E-sites of the ribosome and inserts a C-terminal helix into the mRNA exit channel to preclude translation. The polypeptide is Interferon-related developmental regulator 2 (Homo sapiens (Human)).